A 244-amino-acid polypeptide reads, in one-letter code: rRNA adenine N-6-methyltransferase (244 aa).

S-adenosyl-L-methionine contacts are provided by N11, I13, G38, E59, D84, and N101.

Belongs to the class I-like SAM-binding methyltransferase superfamily. rRNA adenine N(6)-methyltransferase family.

It carries out the reaction adenosine(2085) in 23S rRNA + 2 S-adenosyl-L-methionine = N(6)-dimethyladenosine(2085) in 23S rRNA + 2 S-adenosyl-L-homocysteine + 2 H(+). Its function is as follows. This protein produces a dimethylation of the adenine residue at position 2085 in 23S rRNA, resulting in reduced affinity between ribosomes and macrolide-lincosamide-streptogramin B antibiotics. The sequence is that of rRNA adenine N-6-methyltransferase (ermC') from Bacillus subtilis.